Here is a 409-residue protein sequence, read N- to C-terminus: E3 ubiquitin-protein ligase MARCHF4 (409 aa).

The first 17 residues, 1 to 17 (MLMPLGGLLWWWCCCCG), serve as a signal peptide directing secretion. The disordered stretch occupies residues 92-133 (GPREAVGRETPPLPPPPPLPPSGDDDWDGPATGPPASLLSSA). Residues 102 to 112 (PPLPPPPPLPP) show a composition bias toward pro residues. The segment at 154 to 214 (DSGMRTPLCR…ELCYYKYHVI (61 aa)) adopts an RING-CH-type zinc-finger fold. Residues C162, C165, C178, C180, H188, C191, C204, and C207 each coordinate Zn(2+). A run of 2 helical transmembrane segments spans residues 242–262 (LGSLFLIASISWLIWSTFSPS) and 271–291 (LFQICYGMYGFMDVVCIGLII). Disordered regions lie at residues 323-372 (EDQK…GPVS) and 389-409 (PHDQRSTQGSGRELVMRVTTV). The span at 328–343 (GGRTNLQTSSSAQANL) shows a compositional bias: polar residues.

The protein resides in the golgi apparatus membrane. It catalyses the reaction S-ubiquitinyl-[E2 ubiquitin-conjugating enzyme]-L-cysteine + [acceptor protein]-L-lysine = [E2 ubiquitin-conjugating enzyme]-L-cysteine + N(6)-ubiquitinyl-[acceptor protein]-L-lysine.. It participates in protein modification; protein ubiquitination. E3 ubiquitin-protein ligase that may mediate ubiquitination of MHC-I and CD4, and promote their subsequent endocytosis and sorting to lysosomes via multivesicular bodies. E3 ubiquitin ligases accept ubiquitin from an E2 ubiquitin-conjugating enzyme in the form of a thioester and then directly transfer the ubiquitin to targeted substrates. The sequence is that of E3 ubiquitin-protein ligase MARCHF4 (Marchf4) from Mus musculus (Mouse).